The primary structure comprises 333 residues: Olfactory receptor 9S13 (333 aa).

The Extracellular portion of the chain corresponds to 1–35; sequence MATAVHRNGSLTPVSLRVFVLVGFGGGALTQALLF. Asparagine 8 carries an N-linked (GlcNAc...) asparagine glycan. The helical transmembrane segment at 36 to 56 threads the bilayer; the sequence is AVFLVLYVVTVLGNLTMIVVI. Over 57 to 72 the chain is Cytoplasmic; it reads TLDARLHSPMYFFLKN. The chain crosses the membrane as a helical span at residues 73 to 93; it reads LSFVDLCYSSAIAPNALANFL. Over 94 to 106 the chain is Extracellular; it reads STSKVISFEACAT. Residues cysteine 104 and cysteine 196 are joined by a disulfide bond. A helical transmembrane segment spans residues 107–127; it reads QFFFFSLLATTETFLLAVMAY. The Cytoplasmic portion of the chain corresponds to 128–150; sequence DRFMAICSPLRYPVTMCPTTCTR. The helical transmembrane segment at 151 to 171 threads the bilayer; the sequence is LVLGTFCVGCLNSIVQTSLTF. At 172 to 203 the chain is on the extracellular side; that stretch reads QLPFCSSNRIDHFYCDVPPLLQLACASTALNE. Residues 204 to 224 traverse the membrane as a helical segment; the sequence is LFLFGLCGFIIVSTTLAVLVS. The Cytoplasmic segment spans residues 225 to 251; that stretch reads YGYITVTILRMHSGSGRHKVFSTCGSH. A helical membrane pass occupies residues 252-272; sequence LTAVSLFYGTLFVMYAQPGAL. Over 273–278 the chain is Extracellular; sequence TSMEQG. Residues 279 to 299 traverse the membrane as a helical segment; it reads KVVSIFYTLVIPMLNPLIYSL. Topologically, residues 300–333 are cytoplasmic; that stretch reads RNKDVKDALQRLGQRHSLVKAVRGCPAAGGNASV.

This sequence belongs to the G-protein coupled receptor 1 family.

It localises to the cell membrane. Functionally, odorant receptor. This Mus musculus (Mouse) protein is Olfactory receptor 9S13.